Here is a 277-residue protein sequence, read N- to C-terminus: Secoisolariciresinol dehydrogenase (277 aa).

NAD(+) is bound by residues 24-29 (GGASGI), aspartate 48, valine 73, and asparagine 99. Serine 163 contacts substrate. Tyrosine 166 serves as the catalytic Proton donor/acceptor. Lysine 170 serves as a coordination point for NAD(+).

This sequence belongs to the short-chain dehydrogenases/reductases (SDR) family. In terms of assembly, homotetramer.

The enzyme catalyses (-)-secoisolariciresinol + 2 NAD(+) = (-)-matairesinol + 2 NADH + 2 H(+). Oxidoreductase involved in lignan biosynthesis. Catalyzes the stereospecific conversion of (-)-secoisolariciresinol to (-)-matairesinol via a lactol intermediate. This chain is Secoisolariciresinol dehydrogenase, found in Forsythia intermedia (Border forsythia).